The primary structure comprises 481 residues: MEKIIDEKKQGNSLVLEPKAKNTRKLFIESYGCAMNFSDSEIVASILSKEGFNTTQNLEEADLVLVNTCSIREKAEQTVRKRLEKYNAVKRINPGMKVGVLGCMAERLKDKFLEEEKIVDLVVGPDAYKDLPNLINEVEEGRDAINVILSKEETYGDISPVRLQSNGVSAFVSITRGCDNMCTFCVVPFTRGRERSRDPQSIVEEVNDLAAKGYKEITLLGQNVDSYLWYGGGLKKDFKNATEIQKATATNFAALLKLVAEAQPKMRIRFSTSNPQDMTLDVIEAMAAYRNICNYIHLPVQSGSDRILKKMNRLHTREEYFTLIDNIKKMIPNCGISHDLITGFPTETEEDHQDTLSLMEYVKYDFGYMFTYSERPGTTAERKLEDDIPEETKKRRLQEIVDLQQKHSKQNTNSVIGTTVEVLIEKESKKSNKHWSGRNERNTVTVFSKENYQIGDFVKVKIHDCTSATLIGEPIGLSDNN.

The region spanning 24–140 is the MTTase N-terminal domain; sequence RKLFIESYGC…LPNLINEVEE (117 aa). [4Fe-4S] cluster-binding residues include C33, C69, C103, C178, C182, and C185. The 247-residue stretch at 164–410 folds into the Radical SAM core domain; it reads QSNGVSAFVS…VDLQQKHSKQ (247 aa). Residues 413–476 enclose the TRAM domain; the sequence is NSVIGTTVEV…SATLIGEPIG (64 aa).

It belongs to the methylthiotransferase family. MiaB subfamily. Monomer. It depends on [4Fe-4S] cluster as a cofactor.

The protein localises to the cytoplasm. The enzyme catalyses N(6)-dimethylallyladenosine(37) in tRNA + (sulfur carrier)-SH + AH2 + 2 S-adenosyl-L-methionine = 2-methylsulfanyl-N(6)-dimethylallyladenosine(37) in tRNA + (sulfur carrier)-H + 5'-deoxyadenosine + L-methionine + A + S-adenosyl-L-homocysteine + 2 H(+). Catalyzes the methylthiolation of N6-(dimethylallyl)adenosine (i(6)A), leading to the formation of 2-methylthio-N6-(dimethylallyl)adenosine (ms(2)i(6)A) at position 37 in tRNAs that read codons beginning with uridine. This chain is tRNA-2-methylthio-N(6)-dimethylallyladenosine synthase, found in Christiangramia forsetii (strain DSM 17595 / CGMCC 1.15422 / KT0803) (Gramella forsetii).